We begin with the raw amino-acid sequence, 327 residues long: Aspartate carbamoyltransferase catalytic subunit (327 aa).

Positions 67 and 68 each coordinate carbamoyl phosphate. Residue Lys95 coordinates L-aspartate. Residues Arg117, His145, and Gln148 each coordinate carbamoyl phosphate. Positions 178 and 232 each coordinate L-aspartate. Carbamoyl phosphate contacts are provided by Gly273 and Pro274.

This sequence belongs to the aspartate/ornithine carbamoyltransferase superfamily. ATCase family. In terms of assembly, heterododecamer (2C3:3R2) of six catalytic PyrB chains organized as two trimers (C3), and six regulatory PyrI chains organized as three dimers (R2).

It catalyses the reaction carbamoyl phosphate + L-aspartate = N-carbamoyl-L-aspartate + phosphate + H(+). It participates in pyrimidine metabolism; UMP biosynthesis via de novo pathway; (S)-dihydroorotate from bicarbonate: step 2/3. In terms of biological role, catalyzes the condensation of carbamoyl phosphate and aspartate to form carbamoyl aspartate and inorganic phosphate, the committed step in the de novo pyrimidine nucleotide biosynthesis pathway. The protein is Aspartate carbamoyltransferase catalytic subunit of Parvibaculum lavamentivorans (strain DS-1 / DSM 13023 / NCIMB 13966).